Reading from the N-terminus, the 338-residue chain is F420-dependent glucose-6-phosphate dehydrogenase (338 aa).

A coenzyme F420-(gamma-Glu)n-binding site is contributed by aspartate 40. The Proton donor role is filled by histidine 41. Coenzyme F420-(gamma-Glu)n contacts are provided by residues threonine 77 and 108-109 (TG). The active-site Proton acceptor is the glutamate 110. Residues asparagine 113, 178 to 179 (GG), and 181 to 182 (VV) contribute to the coenzyme F420-(gamma-Glu)n site. Residues threonine 196, lysine 199, lysine 260, and arginine 284 each coordinate substrate.

Belongs to the F420-dependent glucose-6-phosphate dehydrogenase family. As to quaternary structure, homodimer.

The enzyme catalyses oxidized coenzyme F420-(gamma-L-Glu)(n) + D-glucose 6-phosphate + H(+) = 6-phospho-D-glucono-1,5-lactone + reduced coenzyme F420-(gamma-L-Glu)(n). In terms of biological role, catalyzes the coenzyme F420-dependent oxidation of glucose 6-phosphate (G6P) to 6-phosphogluconolactone. The chain is F420-dependent glucose-6-phosphate dehydrogenase from Gordonia bronchialis (strain ATCC 25592 / DSM 43247 / BCRC 13721 / JCM 3198 / KCTC 3076 / NBRC 16047 / NCTC 10667) (Rhodococcus bronchialis).